The primary structure comprises 258 residues: Phosphate import ATP-binding protein PstB (258 aa).

Residues 5-247 (IDVSGLNAYY…ERIFSNPSVQ (243 aa)) form the ABC transporter domain. 37–44 (GPSGCGKS) serves as a coordination point for ATP.

It belongs to the ABC transporter superfamily. Phosphate importer (TC 3.A.1.7) family. In terms of assembly, the complex is composed of two ATP-binding proteins (PstB), two transmembrane proteins (PstC and PstA) and a solute-binding protein (PstS).

It localises to the cell membrane. The catalysed reaction is phosphate(out) + ATP + H2O = ADP + 2 phosphate(in) + H(+). Its function is as follows. Part of the ABC transporter complex PstSACB involved in phosphate import. Responsible for energy coupling to the transport system. The protein is Phosphate import ATP-binding protein PstB of Streptomyces coelicolor (strain ATCC BAA-471 / A3(2) / M145).